The sequence spans 579 residues: Probable methyl-accepting chemotaxis protein BT9727_0355 (579 aa).

The Cytoplasmic portion of the chain corresponds to 1 to 13 (MKKYWHKLSFLQK). A helical transmembrane segment spans residues 14 to 34 (NVLLTVLVILTLVGTMGALSF). Topologically, residues 35–198 (NMFQNSMMSI…ASIVPSTKEK (164 aa)) are extracellular. A helical transmembrane segment spans residues 199-219 (FIIQGLMFICISVLIATVIQF). Residues 220 to 579 (LIVRNALAPL…LQELIGEFKS (360 aa)) are Cytoplasmic-facing. Residues 223 to 274 (RNALAPLRDLREGLRRVGEGDLNIKLEERSDDIGIINSYFNNTIEKFKGIID) form the HAMP domain. Glutamate 289 is modified (glutamate methyl ester (Glu)). The 237-residue stretch at 293–529 (STKENSMAVQ…NIVRVVNELS (237 aa)) folds into the Methyl-accepting transducer domain. At glutamate 548 the chain carries Glutamate methyl ester (Glu).

The protein belongs to the methyl-accepting chemotaxis (MCP) protein family.

It localises to the cell membrane. Chemotactic-signal transducers respond to changes in the concentration of attractants and repellents in the environment, transduce a signal from the outside to the inside of the cell, and facilitate sensory adaptation through the variation of the level of methylation. In Bacillus thuringiensis subsp. konkukian (strain 97-27), this protein is Probable methyl-accepting chemotaxis protein BT9727_0355.